The following is a 246-amino-acid chain: Trypsin-5 (246 aa).

Positions 1–15 (MNSLLFLALVGAAVA) are cleaved as a signal peptide. A propeptide spans 16–23 (FPVDDDDK) (activation peptide). The Peptidase S1 domain maps to 24–244 (IVGGYTCREN…YVDWIQDTIA (221 aa)). Cys-48 and Cys-64 are joined by a disulfide. Active-site charge relay system residues include His-63 and Asp-107. Disulfide bonds link Cys-139/Cys-206, Cys-171/Cys-185, and Cys-196/Cys-220. The active-site Charge relay system is the Ser-200.

This sequence belongs to the peptidase S1 family. Proteolytically cleaved and activated by an autocatalytic mechanism. Cleavage by CTRC inhibits autoactivation. As to expression, expressed in the heart, lung, brain, kidney, liver, epididymis, ovary and uterus. Expression in the testis is limited to round and elongating spermatids.

It localises to the cytoplasmic vesicle. Its subcellular location is the secretory vesicle. It is found in the acrosome. The enzyme catalyses Preferential cleavage: Arg-|-Xaa, Lys-|-Xaa.. Its activity is regulated as follows. Activated by autocatalytic cleavage. Cleavage by CTRC inhibits autoactivation. Its function is as follows. Serine protease capable of autoactivation. The protein is Trypsin-5 of Mus musculus (Mouse).